The primary structure comprises 299 residues: Formylglycine-generating enzyme (299 aa).

Residues Cys-263 and Cys-268 each contribute to the Cu cation site.

The protein belongs to the sulfatase-modifying factor family. Cu cation is required as a cofactor.

It carries out the reaction L-cysteinyl-[sulfatase] + 2 a thiol + O2 = an organic disulfide + 3-oxo-L-alanyl-[sulfatase] + hydrogen sulfide + H2O + H(+). It participates in protein modification; sulfatase oxidation. Oxidase that catalyzes the conversion of cysteine to 3-oxoalanine on target proteins. 3-oxoalanine modification, which is also named formylglycine (fGly), occurs in the maturation of arylsulfatases and some alkaline phosphatases that use the hydrated form of 3-oxoalanine as a catalytic nucleophile. This chain is Formylglycine-generating enzyme, found in Mycobacterium tuberculosis (strain ATCC 25618 / H37Rv).